The following is a 519-amino-acid chain: Zinc finger and BTB domain-containing protein 18.3 (519 aa).

Residues 24-91 (CDCTVLVGDA…MYEGKLQFKD (68 aa)) form the BTB domain. The segment at 189–227 (ASIPQTGGEVDTHTTAAGKTADSPCSSTGSLSHRSATSM) is disordered. Polar residues predominate over residues 201 to 227 (HTTAAGKTADSPCSSTGSLSHRSATSM). C2H2-type zinc fingers lie at residues 367 to 389 (FMCP…LSTH), 407 to 429 (PTCS…ERTH), 435 to 457 (FTCT…AVVH), and 463 to 486 (HACK…RKFH).

It belongs to the krueppel C2H2-type zinc-finger protein family. ZBTB18 subfamily.

The protein resides in the nucleus. Functionally, transcriptional repressor that plays a role in various developmental processes. Specifically binds the consensus DNA sequence 5'-[AC]ACATCTG[GT][AC]-3' which contains the E box core, and acts by recruiting chromatin remodeling multiprotein complexes. The chain is Zinc finger and BTB domain-containing protein 18.3 (zbtb18.3) from Xenopus laevis (African clawed frog).